The following is a 105-amino-acid chain: MEKCINRYKDILPLNRYSDGSGKCWGLLGCEISSVVGQTGVKRLLLGSITKFVYCSMRLFSLYTIVQYFKSLRCLRNGRTEVRLYTHYKRHLPRSVNSIYLQTNC.

This is an uncharacterized protein from Schizosaccharomyces pombe (strain 972 / ATCC 24843) (Fission yeast).